A 513-amino-acid polypeptide reads, in one-letter code: Xylose import ATP-binding protein XylG (513 aa).

ABC transporter domains lie at 5 to 242 (LEMK…VGRE) and 259 to 505 (LRIE…LRSE). 37–44 (GENGSGKS) contributes to the ATP binding site.

It belongs to the ABC transporter superfamily. Xylose importer (TC 3.A.1.2.4) family. As to quaternary structure, the complex is composed of two ATP-binding proteins (XylG), two transmembrane proteins (XylH) and a solute-binding protein (XylF).

Its subcellular location is the cell inner membrane. The catalysed reaction is D-xylose(out) + ATP + H2O = D-xylose(in) + ADP + phosphate + H(+). Part of the ABC transporter complex XylFGH involved in xylose import. Responsible for energy coupling to the transport system. The polypeptide is Xylose import ATP-binding protein XylG (Escherichia coli O6:K15:H31 (strain 536 / UPEC)).